The chain runs to 321 residues: Gap junction delta-2 protein (321 aa).

Over 1 to 19 the chain is Cytoplasmic; sequence MGEWTILERLLEAAVQQHS. The chain crosses the membrane as a helical span at residues 20-42; sequence TMIGRILLTVVVIFRILIVAIVG. Residues 43-75 are Extracellular-facing; that stretch reads ETVYDDEQTMFVCNTLQPGCNQACYDRAFPISH. The helical transmembrane segment at 76 to 98 threads the bilayer; the sequence is IRYWVFQIIMVCTPSLCFITYSV. The Cytoplasmic portion of the chain corresponds to 99 to 197; that stretch reads HQSAKQRERR…KLRRQEGISR (99 aa). The interval 120 to 141 is disordered; sequence PAESIGGPGGTGGGGSGGSKRE. The segment covering 125–137 has biased composition (gly residues); the sequence is GGPGGTGGGGSGG. Residues 198 to 220 traverse the membrane as a helical segment; the sequence is FYIIQVVFRNALEIGFLVGQYFL. Over 221–252 the chain is Extracellular; sequence YGFSVPGLYECNRYPCIKEVECYVSRPTEKTV. A helical transmembrane segment spans residues 253 to 275; the sequence is FLVFMFAVSGICVVLNLAELNHL. Topologically, residues 276–321 are cytoplasmic; that stretch reads GWRKIKLAVRGAQAKRKSVYEIRNKDLPRVSVPNFGRTQSSDSAYV.

Belongs to the connexin family. Delta-type subfamily. A connexon is composed of a hexamer of connexins. Highly expressed in neurons.

The protein localises to the cell membrane. It is found in the cell junction. Its subcellular location is the gap junction. In terms of biological role, one gap junction consists of a cluster of closely packed pairs of transmembrane channels, the connexons, through which materials of low MW diffuse from one cell to a neighboring cell. This is Gap junction delta-2 protein (Gjd2) from Mus musculus (Mouse).